Consider the following 330-residue polypeptide: Zinc finger Ran-binding domain-containing protein 2 (330 aa).

A Phosphoserine modification is found at Ser9. The RanBP2-type 1 zinc-finger motif lies at 9–40 (SDGDWICPDKKCGNVNFARRTSCNRCGREKTT). An N6-acetyllysine mark is found at Lys18, Lys54, and Lys92. Residues 65–94 (SANDWQCKTCSNVNWARRSECNMCNTPKYA) form a RanBP2-type 2 zinc finger. A disordered region spans residues 117–330 (REESDGEYDE…SGSRSSSKKK (214 aa)). Ser120, Ser153, Ser181, Ser188, and Ser193 each carry phosphoserine. A compositionally biased stretch (acidic residues) spans 150–163 (DKESEGEEEDEDED). The required for nuclear targeting stretch occupies residues 151-324 (KESEGEEEDE…SSGSSHSGSR (174 aa)). A compositionally biased stretch (basic residues) spans 196 to 210 (KKSNRRSRSKSRSSH). 2 stretches are compositionally biased toward low complexity: residues 211-224 (SRSSSRSSSPSSSR) and 232-242 (RSSSSSQSRSR). Basic residues-rich tracts occupy residues 251-273 (SRGSKSRSSSRSHRGSSSPRKRS) and 298-314 (RKKRRTRSRSPERRHRS). Thr303 carries the phosphothreonine modification. A phosphoserine mark is found at Ser305, Ser307, and Arg310. Residues 315–330 (SSGSSHSGSRSSSKKK) show a composition bias toward low complexity.

Belongs to the ZRANB2 family. In terms of assembly, interacts with the C-terminal half of SNRNP70, the Arg/Ser-rich domain of AKAP17A as well as with U2AF1 and CLK1. Post-translationally, isoform 2 is phosphorylated on Ser-310 upon DNA damage, probably by ATM or ATR.

Its subcellular location is the nucleus. In terms of biological role, splice factor required for alternative splicing of TRA2B/SFRS10 transcripts. Binds to ssRNA containing the consensus sequence 5'-AGGUAA-3'. May interfere with constitutive 5'-splice site selection. The sequence is that of Zinc finger Ran-binding domain-containing protein 2 (ZRANB2) from Homo sapiens (Human).